A 630-amino-acid polypeptide reads, in one-letter code: Vacuolar protein 8 (630 aa).

Residue Gly-2 is the site of N-myristoyl glycine attachment. ARM repeat units follow at residues 74–115 (EITE…NLAV), 117–156 (AENK…NLAT), 158–197 (DENK…NMTH), 199–238 (DENR…NIAV), 242–281 (NRKK…NLAS), 283–322 (SKYQ…NVSI), 324–364 (PANE…NLAA), 408–447 (DDLK…NLSS), and 456–495 (FNAV…QLLE). 2 disordered regions span residues 519-558 (AKSP…EGEG) and 572-630 (EVGE…GRDR). The span at 543–558 (SEDEFEDGLTDQEGEG) shows a compositional bias: acidic residues. Positions 598–607 (GQGQTSQVGS) are enriched in polar residues.

The protein belongs to the beta-catenin family.

The protein resides in the vacuole membrane. In terms of biological role, functions in both vacuole inheritance and protein targeting from the cytoplasm to vacuole. The chain is Vacuolar protein 8 (VAC8) from Cryptococcus neoformans var. neoformans serotype D (strain B-3501A) (Filobasidiella neoformans).